The chain runs to 617 residues: Arrestin domain-containing protein B (617 aa).

The C2 domain maps to methionine 1–leucine 109. Aspartate 20, aspartate 27, aspartate 76, aspartate 78, and aspartate 84 together coordinate Ca(2+).

This sequence belongs to the arrestin family. It depends on Ca(2+) as a cofactor.

The sequence is that of Arrestin domain-containing protein B (adcB) from Dictyostelium discoideum (Social amoeba).